The following is a 398-amino-acid chain: Acetylornithine aminotransferase (398 aa).

Residues Gly-105–Ala-106 and Phe-138 contribute to the pyridoxal 5'-phosphate site. Arg-141 is a N(2)-acetyl-L-ornithine binding site. A pyridoxal 5'-phosphate-binding site is contributed by Asp-223 to Gln-226. N6-(pyridoxal phosphate)lysine is present on Lys-252. Residue Thr-280 coordinates N(2)-acetyl-L-ornithine. Residue Thr-281 coordinates pyridoxal 5'-phosphate.

It belongs to the class-III pyridoxal-phosphate-dependent aminotransferase family. ArgD subfamily. Homodimer. Pyridoxal 5'-phosphate serves as cofactor.

The protein resides in the cytoplasm. It carries out the reaction N(2)-acetyl-L-ornithine + 2-oxoglutarate = N-acetyl-L-glutamate 5-semialdehyde + L-glutamate. It functions in the pathway amino-acid biosynthesis; L-arginine biosynthesis; N(2)-acetyl-L-ornithine from L-glutamate: step 4/4. This chain is Acetylornithine aminotransferase, found in Methanocaldococcus jannaschii (strain ATCC 43067 / DSM 2661 / JAL-1 / JCM 10045 / NBRC 100440) (Methanococcus jannaschii).